The primary structure comprises 344 residues: N-acetyl-gamma-glutamyl-phosphate reductase (344 aa).

Residue cysteine 149 is part of the active site.

The protein belongs to the NAGSA dehydrogenase family. Type 1 subfamily.

It localises to the cytoplasm. It carries out the reaction N-acetyl-L-glutamate 5-semialdehyde + phosphate + NADP(+) = N-acetyl-L-glutamyl 5-phosphate + NADPH + H(+). Its pathway is amino-acid biosynthesis; L-arginine biosynthesis; N(2)-acetyl-L-ornithine from L-glutamate: step 3/4. In terms of biological role, catalyzes the NADPH-dependent reduction of N-acetyl-5-glutamyl phosphate to yield N-acetyl-L-glutamate 5-semialdehyde. The polypeptide is N-acetyl-gamma-glutamyl-phosphate reductase (Halorhodospira halophila (strain DSM 244 / SL1) (Ectothiorhodospira halophila (strain DSM 244 / SL1))).